A 254-amino-acid polypeptide reads, in one-letter code: Small ribosomal subunit protein uS5 (254 aa).

A compositionally biased stretch (polar residues) spans 1–10 (MSAPEAQQQK). The disordered stretch occupies residues 1-34 (MSAPEAQQQKRGGFGGRNRGRPNRRGPRNTEEKG). The residue at position 2 (serine 2) is an N-acetylserine. Arginine 11 carries the asymmetric dimethylarginine; by HMT1; alternate modification. Arginine 11 carries the post-translational modification Omega-N-methylarginine; by HMT1; alternate. Omega-N-methylarginine; by HMT1 is present on arginine 17. Basic residues predominate over residues 18-27 (NRGRPNRRGP). A Glycyl lysine isopeptide (Lys-Gly) (interchain with G-Cter in ubiquitin) cross-link involves residue lysine 33. Residues 76–139 (LQDEVMNIKP…IIAKLSVIPI (64 aa)) enclose the S5 DRBM domain.

The protein belongs to the universal ribosomal protein uS5 family. Component of the small ribosomal subunit (SSU). Mature yeast ribosomes consist of a small (40S) and a large (60S) subunit. The 40S small subunit contains 1 molecule of ribosomal RNA (18S rRNA) and 33 different proteins (encoded by 57 genes). The large 60S subunit contains 3 rRNA molecules (25S, 5.8S and 5S rRNA) and 46 different proteins (encoded by 81 genes). Interacts with snoRNA U3. Interacts with MPP10. Component of the ribosomal small subunit (SSU) processome composed of at least 40 protein subunits and snoRNA U3. Post-translationally, N-terminally acetylated by acetyltransferase NatA.

Its subcellular location is the cytoplasm. The protein localises to the nucleus. It localises to the nucleolus. Component of the ribosome, a large ribonucleoprotein complex responsible for the synthesis of proteins in the cell. The small ribosomal subunit (SSU) binds messenger RNAs (mRNAs) and translates the encoded message by selecting cognate aminoacyl-transfer RNA (tRNA) molecules. The large subunit (LSU) contains the ribosomal catalytic site termed the peptidyl transferase center (PTC), which catalyzes the formation of peptide bonds, thereby polymerizing the amino acids delivered by tRNAs into a polypeptide chain. The nascent polypeptides leave the ribosome through a tunnel in the LSU and interact with protein factors that function in enzymatic processing, targeting, and the membrane insertion of nascent chains at the exit of the ribosomal tunnel. uS5 is important for the assembly and function of the 40S ribosomal subunit. Mutations in this protein affects the control of translational fidelity. Involved in nucleolar processing of pre-18S ribosomal RNA and ribosome assembly. The protein is Small ribosomal subunit protein uS5 of Saccharomyces cerevisiae (strain ATCC 204508 / S288c) (Baker's yeast).